We begin with the raw amino-acid sequence, 1040 residues long: Nucleotide-binding oligomerization domain-containing protein 2 (1040 aa).

2 consecutive CARD domains span residues 26–122 and 126–218; these read CEMC…LHGC and HSLH…EAAT. Residues 63 to 77 carry the ATG16L1-binding motif motif; the sequence is WEVLSWEDYEGFHLL. Residues threonine 239, tyrosine 252, threonine 253, glycine 302, serine 303, glycine 304, lysine 305, serine 306, and threonine 307 each coordinate ADP. A required for CARD9 binding region spans residues 241-274; that stretch reads DGAETLCLEDIYTENVLEVWADVGMAGPPQKSPA. One can recognise an NACHT domain in the interval 293–618; that stretch reads DTVLVVGEAG…FFAAFYLALS (326 aa). Residue 299 to 306 participates in ATP binding; it reads GEAGSGKS. Cysteine 395 carries S-palmitoyl cysteine lipidation. Histidine 603 contacts ADP. 9 LRR repeats span residues 791-812, 816-839, 844-865, 872-884, 900-920, 928-949, 956-976, 984-1005, and 1012-1032; these read RPVA…QLLP, VCKA…IECA, QLQK…SMAK, NFLA…NYIT, SLQF…QALA, SLRW…ALAL, MLEE…CSLA, SLKI…ALLQ, and TILE…DKLG. The S-palmitoyl cysteine moiety is linked to residue cysteine 1033.

This sequence belongs to the NOD1-NOD2 family. As to quaternary structure, homooligomer: homooligomerizes following muramyl dipeptide (MDP)-binding, promoting RIPK2 recruitment. Interacts (via CARD domain) with RIPK2 (via CARD domain). Following RIPK2 recruitment, RIPK2 homooligomerizes via its CARD domain and forms long filaments named RIPosomes. Interacts (via CARD domain) with ubiquitin; inhibiting interaction with RIPK2. Component of a signaling complex consisting of ARHGEF2, NOD2 and RIPK2. Interacts with ANKRD17 (via N-terminus). Interacts with HSPA1A; the interaction enhances NOD2 stability. Interacts (via both CARD domains) with HSP90; the interaction enhances NOD2 stability. Interacts (via CARD domain) with SOCS3; the interaction promotes NOD2 degradation. Interacts (via CARD domain) with ERBIN; the interaction inhibits activation of NOD2. Interacts with MAPKBP1; the interaction is enhanced in the presence of muramyl dipeptide (MDP) and inhibits NOD2 homooligomerization and activation. Interacts with INAVA; the interaction takes place upon Pattern recognition receptor (PRR) stimulation. Interacts (via NACHT domain) with CARD9. Interacts (via CARD domain) with CASP1; this interaction leads to IL1B processing. Also interacts with CASP4. Interacts with NLRP1; this interaction is enhanced in the presence of muramyl dipeptide (MDP) and leads to increased IL1B release. Interacts with NLRP12; this interaction promotes degradation of NOD2 through the ubiquitin-proteasome pathway. Interacts with ANKHD1, C10orf67, CHMP5, DOCK7, ENTR1, KRT15, LDOC1, PPP1R12C, PPP2R3B, TRIM41 and VIM. Interacts with MAVS; interaction takes place following single-stranded RNA (ssRNA)-binding. Interacts with ATG16L1. Interacts with IRGM; promoting IRGM 'Lys-63'-linked polyubiquitination, which is required for interactions with the core autophagy factors. Palmitoylated by ZDHHC5; palmitoylation is required for proper recruitment to the bacterial entry site and hence for proper signaling upon cognate peptidoglycan detection. Palmitoylation promotes localization to the cell membrane. Palmitoylation protects from SQSTM1/p62-dependent autophagic degradation. In terms of processing, polyubiquitinated by TRIM27, leading to proteasome-mediated degradation. Polyubiquitinated and degraded following muramyl dipeptide (MDP) stimulation, conferring MDP tolerance and preventing septic shock. Post-translationally, degraded via selective autophagy following interaction with IRGM. IRGM promotes NOD2-RIPK2 RIPosome recruitment to autophagosome membranes, promoting their SQSTM1/p62-dependent autophagic degradation. O-glycosylated by OGT, O-GlcNAcylation increases protein stability. In terms of tissue distribution, expressed in monocytes, macrophages, dendritic cells, hepatocytes, preadipocytes, epithelial cells of oral cavity, lung and intestine, with higher expression in ileal Paneth cells and in intestinal stem cells. Expressed at higher level in leukocytes.

It localises to the cell membrane. The protein localises to the basolateral cell membrane. Its subcellular location is the cytoplasm. The protein resides in the mitochondrion. Its activity is regulated as follows. ADP-binding promotes an inactive closed conformation. In terms of biological role, pattern recognition receptor (PRR) that detects bacterial peptidoglycan fragments and other danger signals and plays an important role in gastrointestinal immunity. Specifically activated by muramyl dipeptide (MDP), a fragment of bacterial peptidoglycan found in every bacterial peptidoglycan type. NOD2 specifically recognizes and binds 6-O-phospho-MDP, the phosphorylated form of MDP, which is generated by NAGK. 6-O-phospho-MDP-binding triggers oligomerization that facilitates the binding and subsequent activation of the proximal adapter receptor-interacting RIPK2. Following recruitment, RIPK2 undergoes 'Met-1'- (linear) and 'Lys-63'-linked polyubiquitination by E3 ubiquitin-protein ligases XIAP, BIRC2, BIRC3 and the LUBAC complex, becoming a scaffolding protein for downstream effectors, triggering activation of the NF-kappa-B and MAP kinases signaling. This in turn leads to the transcriptional activation of hundreds of genes involved in immune response. Its ability to detect bacterial MDP plays a central role in maintaining the equilibrium between intestinal microbiota and host immune responses to control inflammation. An imbalance in this relationship results in dysbiosis, whereby pathogenic bacteria prevail on commensals, causing damage in the intestinal epithelial barrier as well as allowing bacterial invasion and inflammation. Acts as a regulator of appetite by sensing MDP in a subset of brain neurons: microbiota-derived MDP reach the brain, where they bind and activate NOD2 in inhibitory hypothalamic neurons, decreasing neuronal activity, thereby regulating satiety and body temperature. NOD2-dependent MDP-sensing of bacterial cell walls in the intestinal epithelial compartment contributes to sustained postnatal growth upon undernutrition. Also plays a role in antiviral response by acting as a sensor of single-stranded RNA (ssRNA) from viruses: upon ssRNA-binding, interacts with MAVS, leading to activation of interferon regulatory factor-3/IRF3 and expression of type I interferon. Also acts as a regulator of autophagy in dendritic cells via its interaction with ATG16L1, possibly by recruiting ATG16L1 at the site of bacterial entry. NOD2 activation in the small intestine crypt also contributes to intestinal stem cells survival and function: acts by promoting mitophagy via its association with ATG16L1. In addition to its main role in innate immunity, also regulates the adaptive immune system by acting as regulator of helper T-cell and regulatory T-cells (Tregs). Besides recognizing pathogens, also involved in the endoplasmic reticulum stress response: acts by sensing and binding to the cytosolic metabolite sphingosine-1-phosphate generated in response to endoplasmic reticulum stress, initiating an inflammation process that leads to activation of the NF-kappa-B and MAP kinases signaling. May also be involved in NLRP1 activation following activation by MDP, leading to CASP1 activation and IL1B release in macrophages. Functionally, acts as a pattern recognition receptor (PRR); able to activate NF-kappa-B. Its function is as follows. Can activate NF-kappa-B in a muramyl dipeptide (MDP)-independent manner. The sequence is that of Nucleotide-binding oligomerization domain-containing protein 2 from Homo sapiens (Human).